A 130-amino-acid polypeptide reads, in one-letter code: uncharacterized protein (130 aa).

The segment at 41-64 (DDKDDHMDNQPKTSQTSKKVKLSE) is disordered.

This is an uncharacterized protein from Streptococcus pyogenes serotype M6 (strain ATCC BAA-946 / MGAS10394).